The primary structure comprises 137 residues: NADH dehydrogenase [ubiquinone] 1 beta subcomplex subunit 7 (137 aa).

A lipid anchor (N-myristoyl glycine) is attached at Gly-2. A CHCH domain is found at 56 to 98; sequence RDYCAHYLIRLLKCKRDSFPNFLACKQERHDWDYCEHRDYVMR. A Cx9C motif 1 motif is present at residues 59 to 69; the sequence is CAHYLIRLLKC. Intrachain disulfides connect Cys-59–Cys-90 and Cys-69–Cys-80. Ser-73 carries the phosphoserine modification. Positions 80–90 match the Cx9C motif 2 motif; it reads CKQERHDWDYC. The tract at residues 113–137 is disordered; the sequence is KRREKKAAELAKGQGPGEVDPKVAL.

This sequence belongs to the complex I NDUFB7 subunit family. In terms of assembly, complex I is composed of 45 different subunits.

The protein resides in the mitochondrion inner membrane. It is found in the mitochondrion intermembrane space. Accessory subunit of the mitochondrial membrane respiratory chain NADH dehydrogenase (Complex I), that is believed not to be involved in catalysis. Complex I functions in the transfer of electrons from NADH to the respiratory chain. The immediate electron acceptor for the enzyme is believed to be ubiquinone. The sequence is that of NADH dehydrogenase [ubiquinone] 1 beta subcomplex subunit 7 (NDUFB7) from Gorilla gorilla gorilla (Western lowland gorilla).